We begin with the raw amino-acid sequence, 92 residues long: Acylphosphatase (92 aa).

Positions 5–92 (GVTIYVYGRV…EDIADFIVRH (88 aa)) constitute an Acylphosphatase-like domain. Residues arginine 20 and asparagine 38 contribute to the active site.

Belongs to the acylphosphatase family.

It carries out the reaction an acyl phosphate + H2O = a carboxylate + phosphate + H(+). The polypeptide is Acylphosphatase (acyP) (Photorhabdus laumondii subsp. laumondii (strain DSM 15139 / CIP 105565 / TT01) (Photorhabdus luminescens subsp. laumondii)).